The following is a 167-amino-acid chain: RNA pyrophosphohydrolase (167 aa).

One can recognise a Nudix hydrolase domain in the interval 7 to 160; sequence PYRPCVGVMV…KRRAYEEVVA (154 aa). The Nudix box signature appears at 48–69; it reads GGIDEGEDPLEAACRELYEETG.

Belongs to the Nudix hydrolase family. RppH subfamily. It depends on a divalent metal cation as a cofactor.

Functionally, accelerates the degradation of transcripts by removing pyrophosphate from the 5'-end of triphosphorylated RNA, leading to a more labile monophosphorylated state that can stimulate subsequent ribonuclease cleavage. The protein is RNA pyrophosphohydrolase of Rhizobium meliloti (strain 1021) (Ensifer meliloti).